Here is a 430-residue protein sequence, read N- to C-terminus: Potassium channel subfamily K member 12 (430 aa).

The Cytoplasmic portion of the chain corresponds to 1–38 (MSSRSPRPPPRRSRRRLPRPSCCCCCCRRSHLNEDTGR). The tract at residues 11-16 (RRSRRR) is ER retention/retrieval signal. The helical transmembrane segment at 39–59 (FVLLAALIGLYLVAGATVFSA) threads the bilayer. N-linked (GlcNAc...) asparagine glycosylation occurs at Asn-78. An intramembrane region (pore-forming) is located at residues 114–134 (WDFPGAFYFVGTVVSTIGFGM). K(+) is bound by residues Thr-129, Ile-130, and Gly-131. The tract at residues 129–134 (TIGFGM) is selectivity filter 1. A helical membrane pass occupies residues 145 to 165 (FLIAYGLFGCAGTILFFNLFL). The Cytoplasmic segment spans residues 166 to 212 (ERIISLLAFIMRACRERQLRRSGLLPATFRRGSALSEADSLAGWKPS). Residues 213–233 (VYHVLLILGLFAVLLSCCASA) traverse the membrane as a helical segment. Residues 243-263 (YVDSLYFCFVTFSTIGFGDLV) constitute an intramembrane region (pore-forming). The K(+) site is built by Thr-256, Ile-257, Gly-258, and Phe-259. The tract at residues 256–261 (TIGFGD) is selectivity filter 2. A helical membrane pass occupies residues 282–302 (LFILLGVCCIYSLFNVISILI). Residues 303–430 (KQVLNWMLRK…NRLAETSASR (128 aa)) lie on the Cytoplasmic side of the membrane.

This sequence belongs to the two pore domain potassium channel (TC 1.A.1.8) family. In terms of assembly, homodimer. Heterodimer with KCNK13.

It is found in the cell membrane. Its subcellular location is the endoplasmic reticulum membrane. The enzyme catalyses K(+)(in) = K(+)(out). K(+) channel subunit that may homo- and heterodimerize to form functional channels with distinct regulatory and gating properties. Can heterodimerize with KCNK13 subunit to conduct K(+) outward rectifying currents at the plasma membrane. The homodimers are mainly retained in the endoplasmic reticulum compartment and may be targeted to the cell surface upon phosphorylation or other activation signals yet to be elucidated. In Homo sapiens (Human), this protein is Potassium channel subfamily K member 12.